We begin with the raw amino-acid sequence, 368 residues long: Phosphate acyltransferase (368 aa).

Residues 337 to 368 (LEQAARDASGAGQASPIAGQPAEPYAAQSSKA) are disordered.

Belongs to the PlsX family. As to quaternary structure, homodimer. Probably interacts with PlsY.

Its subcellular location is the cytoplasm. It catalyses the reaction a fatty acyl-[ACP] + phosphate = an acyl phosphate + holo-[ACP]. It functions in the pathway lipid metabolism; phospholipid metabolism. Functionally, catalyzes the reversible formation of acyl-phosphate (acyl-PO(4)) from acyl-[acyl-carrier-protein] (acyl-ACP). This enzyme utilizes acyl-ACP as fatty acyl donor, but not acyl-CoA. In Paraburkholderia phytofirmans (strain DSM 17436 / LMG 22146 / PsJN) (Burkholderia phytofirmans), this protein is Phosphate acyltransferase.